Reading from the N-terminus, the 43-residue chain is Methionine aminopeptidase (43 aa).

This sequence belongs to the peptidase M24A family. Methionine aminopeptidase type 1 subfamily. In terms of assembly, monomer. The cofactor is Co(2+). Zn(2+) is required as a cofactor. Mn(2+) serves as cofactor. It depends on Fe(2+) as a cofactor.

It catalyses the reaction Release of N-terminal amino acids, preferentially methionine, from peptides and arylamides.. Removes the N-terminal methionine from nascent proteins. The N-terminal methionine is often cleaved when the second residue in the primary sequence is small and uncharged (Met-Ala-, Cys, Gly, Pro, Ser, Thr, or Val). Requires deformylation of the N(alpha)-formylated initiator methionine before it can be hydrolyzed. The sequence is that of Methionine aminopeptidase (map) from Klebsiella oxytoca.